The chain runs to 207 residues: Holliday junction branch migration complex subunit RuvA (207 aa).

Residues 1 to 65 (MIGRIRGVIL…EDAQLLYGFN (65 aa)) form a domain I region. Residues 66 to 143 (QKQERALFRE…KGLNGDLFEQ (78 aa)) form a domain II region. Residues 144–158 (NGDIELPASASSKAP) form a flexible linker region. The tract at residues 159–207 (SAADIEAEASAALIALGYKPQEAAKMISRVATAGADSETLIKEALRAAI) is domain III.

The protein belongs to the RuvA family. As to quaternary structure, homotetramer. Forms an RuvA(8)-RuvB(12)-Holliday junction (HJ) complex. HJ DNA is sandwiched between 2 RuvA tetramers; dsDNA enters through RuvA and exits via RuvB. An RuvB hexamer assembles on each DNA strand where it exits the tetramer. Each RuvB hexamer is contacted by two RuvA subunits (via domain III) on 2 adjacent RuvB subunits; this complex drives branch migration. In the full resolvosome a probable DNA-RuvA(4)-RuvB(12)-RuvC(2) complex forms which resolves the HJ.

Its subcellular location is the cytoplasm. Its function is as follows. The RuvA-RuvB-RuvC complex processes Holliday junction (HJ) DNA during genetic recombination and DNA repair, while the RuvA-RuvB complex plays an important role in the rescue of blocked DNA replication forks via replication fork reversal (RFR). RuvA specifically binds to HJ cruciform DNA, conferring on it an open structure. The RuvB hexamer acts as an ATP-dependent pump, pulling dsDNA into and through the RuvAB complex. HJ branch migration allows RuvC to scan DNA until it finds its consensus sequence, where it cleaves and resolves the cruciform DNA. The polypeptide is Holliday junction branch migration complex subunit RuvA (Proteus mirabilis (strain HI4320)).